The sequence spans 208 residues: Protein-L-isoaspartate O-methyltransferase (208 aa).

The active site involves Ser-59.

This sequence belongs to the methyltransferase superfamily. L-isoaspartyl/D-aspartyl protein methyltransferase family.

Its subcellular location is the cytoplasm. It carries out the reaction [protein]-L-isoaspartate + S-adenosyl-L-methionine = [protein]-L-isoaspartate alpha-methyl ester + S-adenosyl-L-homocysteine. Functionally, catalyzes the methyl esterification of L-isoaspartyl residues in peptides and proteins that result from spontaneous decomposition of normal L-aspartyl and L-asparaginyl residues. It plays a role in the repair and/or degradation of damaged proteins. The sequence is that of Protein-L-isoaspartate O-methyltransferase from Aliivibrio fischeri (strain ATCC 700601 / ES114) (Vibrio fischeri).